A 98-amino-acid chain; its full sequence is NADH-ubiquinone oxidoreductase chain 4L (98 aa).

The next 3 membrane-spanning stretches (helical) occupy residues 1–21, 29–49, and 61–81; these read MSMV…GMLV, SLLC…VTIL, and IVLL…LVMV.

Belongs to the complex I subunit 4L family. Core subunit of respiratory chain NADH dehydrogenase (Complex I) which is composed of 45 different subunits.

It localises to the mitochondrion inner membrane. It catalyses the reaction a ubiquinone + NADH + 5 H(+)(in) = a ubiquinol + NAD(+) + 4 H(+)(out). Core subunit of the mitochondrial membrane respiratory chain NADH dehydrogenase (Complex I) which catalyzes electron transfer from NADH through the respiratory chain, using ubiquinone as an electron acceptor. Part of the enzyme membrane arm which is embedded in the lipid bilayer and involved in proton translocation. The polypeptide is NADH-ubiquinone oxidoreductase chain 4L (MT-ND4L) (Canis latrans (Coyote)).